We begin with the raw amino-acid sequence, 412 residues long: ORC1-type DNA replication protein 2 (412 aa).

ATP contacts are provided by residues 61–65 (VGKTA), Tyr207, and Arg219.

The protein belongs to the CDC6/cdc18 family.

In terms of biological role, involved in regulation of DNA replication. In Haloarcula marismortui (strain ATCC 43049 / DSM 3752 / JCM 8966 / VKM B-1809) (Halobacterium marismortui), this protein is ORC1-type DNA replication protein 2 (cdc6b).